Here is a 343-residue protein sequence, read N- to C-terminus: Lumican (343 aa).

Residues 1-18 (MTLNSLPIFLVLISGIFC) form the signal peptide. Q19 is subject to Pyrrolidone carboxylic acid. Sulfotyrosine is present on residues Y20 and Y22. Positions 31–69 (DPFGPSTAVCAPECNCPLSYPTAMYCDNLKLKTIPIVPS) constitute an LRRNT domain. 8 LRR repeats span residues 70–91 (GIKY…TFDN), 94–117 (DLQW…VFSK), 120–140 (NLKK…PLPK), 141–162 (TLDD…ALEG), 165–186 (NLTV…GAFK), 190–211 (SLLY…LPHS), 212–232 (LLML…YFQG), and 235–255 (TLQY…PGNV). An N-linked (GlcNAc...) (keratan sulfate) asparagine glycan is attached at N91. N-linked (GlcNAc...) (keratan sulfate) asparagine glycosylation is present at N130. Residue N165 is glycosylated (N-linked (GlcNAc...) (keratan sulfate) asparagine). N-linked (GlcNAc...) (keratan sulfate) asparagine glycosylation is present at N257. LRR repeat units follow at residues 260-281 (SLVE…SENL), 282-301 (ENFY…SFCK), and 310-330 (KITH…PQEM). The cysteines at positions 300 and 333 are disulfide-linked. N320 carries an N-linked (GlcNAc...) asparagine glycan.

It belongs to the small leucine-rich proteoglycan (SLRP) family. SLRP class II subfamily. Binds to laminin. In terms of processing, contains keratan sulfate. As to expression, cornea and other tissues.

The protein resides in the secreted. Its subcellular location is the extracellular space. The protein localises to the extracellular matrix. This is Lumican (LUM) from Gallus gallus (Chicken).